We begin with the raw amino-acid sequence, 98 residues long: NADH-ubiquinone oxidoreductase chain 4L (98 aa).

Transmembrane regions (helical) follow at residues 1 to 21 (MTSI…GVLI), 28 to 48 (STLL…ALLI), and 59 to 79 (APLI…ALLV).

Belongs to the complex I subunit 4L family. In terms of assembly, core subunit of respiratory chain NADH dehydrogenase (Complex I) which is composed of 45 different subunits.

It is found in the mitochondrion inner membrane. The enzyme catalyses a ubiquinone + NADH + 5 H(+)(in) = a ubiquinol + NAD(+) + 4 H(+)(out). In terms of biological role, core subunit of the mitochondrial membrane respiratory chain NADH dehydrogenase (Complex I) which catalyzes electron transfer from NADH through the respiratory chain, using ubiquinone as an electron acceptor. Part of the enzyme membrane arm which is embedded in the lipid bilayer and involved in proton translocation. The protein is NADH-ubiquinone oxidoreductase chain 4L (MT-ND4L) of Vombatus ursinus (Common wombat).